The primary structure comprises 288 residues: Serine/threonine-protein acetyltransferase YopJ (288 aa).

Catalysis depends on residues histidine 109 and glutamate 128. Position 109 (histidine 109) interacts with CoA. Position 167–168 (167–168) interacts with CoA; sequence RS. Cysteine 172 is an active-site residue. Residues 182 to 185 and 224 to 225 contribute to the 1D-myo-inositol hexakisphosphate site; these read KLYI and KH. Residue 227-230 participates in CoA binding; it reads QGKK. Arginine 257 is a 1D-myo-inositol hexakisphosphate binding site. 266–270 lines the CoA pocket; the sequence is DGKEL.

The protein belongs to the acetyltransferase YopJ family. It depends on 1D-myo-inositol hexakisphosphate as a cofactor.

Its subcellular location is the secreted. The catalysed reaction is L-threonyl-[protein] + acetyl-CoA = O-acetyl-L-threonyl-[protein] + CoA. It catalyses the reaction L-seryl-[protein] + acetyl-CoA = O-acetyl-L-seryl-[protein] + CoA. 1D-myo-inositol hexakisphosphate activates protein-acetyltransferase activity via an allosteric mechanism: 1D-myo-inositol hexakisphosphate-binding induces a conformational rearrangement that stimulates the interaction with acetyl-CoA. Serine/threonine-protein acetyltransferase translocated into infected cells, which inhibits the host immune response and induces cell death by mediating acetylation of target proteins. Inhibits the MAPK and NF-kappa-B signaling pathways by acetylating protein-kinases such as MAP2K1, MAP2K6, MAP3K7/TAK1 and I-kappa-B kinase (CHUK/IKKA and IKBKB) on serine and threonine residues critical for their activation by phosphorylation, thereby preventing protein-kinase activation. Promotes pyroptosis, a programmed cell death, in host cells by mediating acetylation of MAP3K7/TAK1: MAP3K7/TAK1 inactivation triggers activation of caspase-8 (CASP8), followed by CASP8-dependent cleavage of gasdermin-D (GSDMD) and induction of pyroptosis. Also able to induce intestinal barrier dysfunction by acetylating and inhibiting host protein-kinases RIPK2/RICK and MAP3K7/TAK1, thereby promoting cell death. In Yersinia pseudotuberculosis serotype I (strain IP32953), this protein is Serine/threonine-protein acetyltransferase YopJ.